We begin with the raw amino-acid sequence, 91 residues long: Acylphosphatase (91 aa).

The Acylphosphatase-like domain maps to 4–91; that stretch reads RYLIKVLGRV…DNEKSFKIVY (88 aa). Active-site residues include Arg19 and Asn37.

The protein belongs to the acylphosphatase family.

It catalyses the reaction an acyl phosphate + H2O = a carboxylate + phosphate + H(+). The chain is Acylphosphatase (acyP) from Clostridium acetobutylicum (strain ATCC 824 / DSM 792 / JCM 1419 / IAM 19013 / LMG 5710 / NBRC 13948 / NRRL B-527 / VKM B-1787 / 2291 / W).